Here is a 183-residue protein sequence, read N- to C-terminus: Crossover junction endodeoxyribonuclease RuvC (183 aa).

Residues Asp-7, Glu-66, and Asp-138 contribute to the active site. Mg(2+) is bound by residues Asp-7, Glu-66, and Asp-138.

Belongs to the RuvC family. Homodimer which binds Holliday junction (HJ) DNA. The HJ becomes 2-fold symmetrical on binding to RuvC with unstacked arms; it has a different conformation from HJ DNA in complex with RuvA. In the full resolvosome a probable DNA-RuvA(4)-RuvB(12)-RuvC(2) complex forms which resolves the HJ. The cofactor is Mg(2+).

The protein resides in the cytoplasm. The enzyme catalyses Endonucleolytic cleavage at a junction such as a reciprocal single-stranded crossover between two homologous DNA duplexes (Holliday junction).. The RuvA-RuvB-RuvC complex processes Holliday junction (HJ) DNA during genetic recombination and DNA repair. Endonuclease that resolves HJ intermediates. Cleaves cruciform DNA by making single-stranded nicks across the HJ at symmetrical positions within the homologous arms, yielding a 5'-phosphate and a 3'-hydroxyl group; requires a central core of homology in the junction. The consensus cleavage sequence is 5'-(A/T)TT(C/G)-3'. Cleavage occurs on the 3'-side of the TT dinucleotide at the point of strand exchange. HJ branch migration catalyzed by RuvA-RuvB allows RuvC to scan DNA until it finds its consensus sequence, where it cleaves and resolves the cruciform DNA. The sequence is that of Crossover junction endodeoxyribonuclease RuvC from Burkholderia ambifaria (strain ATCC BAA-244 / DSM 16087 / CCUG 44356 / LMG 19182 / AMMD) (Burkholderia cepacia (strain AMMD)).